Here is a 428-residue protein sequence, read N- to C-terminus: 3-phosphoshikimate 1-carboxyvinyltransferase (428 aa).

3 residues coordinate 3-phosphoshikimate: K21, S22, and R26. Phosphoenolpyruvate is bound at residue K21. 2 residues coordinate phosphoenolpyruvate: G91 and R119. 4 residues coordinate 3-phosphoshikimate: S164, Q166, D311, and K338. Q166 serves as a coordination point for phosphoenolpyruvate. D311 functions as the Proton acceptor in the catalytic mechanism. Phosphoenolpyruvate is bound by residues R342 and R383.

The protein belongs to the EPSP synthase family. As to quaternary structure, monomer.

The protein resides in the cytoplasm. It carries out the reaction 3-phosphoshikimate + phosphoenolpyruvate = 5-O-(1-carboxyvinyl)-3-phosphoshikimate + phosphate. It functions in the pathway metabolic intermediate biosynthesis; chorismate biosynthesis; chorismate from D-erythrose 4-phosphate and phosphoenolpyruvate: step 6/7. Its function is as follows. Catalyzes the transfer of the enolpyruvyl moiety of phosphoenolpyruvate (PEP) to the 5-hydroxyl of shikimate-3-phosphate (S3P) to produce enolpyruvyl shikimate-3-phosphate and inorganic phosphate. The sequence is that of 3-phosphoshikimate 1-carboxyvinyltransferase from Campylobacter concisus (strain 13826).